The sequence spans 565 residues: Thiol:disulfide interchange protein DsbD (565 aa).

Residues 1–19 (MAQRIFTLILLLCSTSVFA) form the signal peptide. 2 disulfides stabilise this stretch: cysteine 122–cysteine 128 and cysteine 182–cysteine 304. 7 helical membrane-spanning segments follow: residues 163–183 (LPFS…TPCV), 208–228 (LLTF…GLVV), 243–263 (YVLI…FGLF), 289–309 (GVFI…TAPL), 323–343 (WLGG…LMLI), 357–377 (WMEQ…VFLL), and 384–404 (IWGL…AFIT). Positions 434 to 565 (WAFGATHTAQ…FSAHLRDRQP (132 aa)) constitute a Thioredoxin domain. Cysteine 480 and cysteine 483 are oxidised to a cystine.

It belongs to the thioredoxin family. DsbD subfamily.

The protein localises to the cell inner membrane. It carries out the reaction [protein]-dithiol + NAD(+) = [protein]-disulfide + NADH + H(+). The enzyme catalyses [protein]-dithiol + NADP(+) = [protein]-disulfide + NADPH + H(+). Functionally, required to facilitate the formation of correct disulfide bonds in some periplasmic proteins and for the assembly of the periplasmic c-type cytochromes. Acts by transferring electrons from cytoplasmic thioredoxin to the periplasm. This transfer involves a cascade of disulfide bond formation and reduction steps. The protein is Thiol:disulfide interchange protein DsbD of Escherichia coli O6:H1 (strain CFT073 / ATCC 700928 / UPEC).